The primary structure comprises 192 residues: Large ribosomal subunit protein uL5 (192 aa).

Belongs to the universal ribosomal protein uL5 family. Part of the 50S ribosomal subunit; part of the 5S rRNA/L5/L18/L25 subcomplex. Contacts the 5S rRNA and the P site tRNA. Forms a bridge to the 30S subunit in the 70S ribosome.

In terms of biological role, this is one of the proteins that bind and probably mediate the attachment of the 5S RNA into the large ribosomal subunit, where it forms part of the central protuberance. In the 70S ribosome it contacts protein S13 of the 30S subunit (bridge B1b), connecting the 2 subunits; this bridge is implicated in subunit movement. Contacts the P site tRNA; the 5S rRNA and some of its associated proteins might help stabilize positioning of ribosome-bound tRNAs. The sequence is that of Large ribosomal subunit protein uL5 from Mesorhizobium japonicum (strain LMG 29417 / CECT 9101 / MAFF 303099) (Mesorhizobium loti (strain MAFF 303099)).